A 467-amino-acid chain; its full sequence is Serine/threonine-protein kinase US3 homolog (467 aa).

The disordered stretch occupies residues 64–155 (GPEVAPPART…PAGGVTREEA (92 aa)). Basic and acidic residues predominate over residues 99–111 (NERRAATGDEKES). A compositionally biased stretch (acidic residues) spans 117–144 (NESESESESESESESGADDGDWDDDDDA). The Protein kinase domain occupies 164-462 (FRIIRRLTPG…AAELLEHPVF (299 aa)). Residues 170-178 (LTPGSEGRV) and K194 contribute to the ATP site. D279 (proton acceptor) is an active-site residue.

This sequence belongs to the protein kinase superfamily. Ser/Thr protein kinase family. In terms of processing, phosphorylated by UL13 homolog; this phosphorylation regulates subsequent phosphorylation of UL31 and UL34 homologs by US3. Autophosphorylated.

It is found in the host cytoplasm. It localises to the host nucleus. The enzyme catalyses L-seryl-[protein] + ATP = O-phospho-L-seryl-[protein] + ADP + H(+). It carries out the reaction L-threonyl-[protein] + ATP = O-phospho-L-threonyl-[protein] + ADP + H(+). Its function is as follows. Multifunctional serine/threonine kinase that plays a role in several processes including egress of virus particles from the nucleus, modulation of the actin cytoskeleton and inhibition of apoptosis. Phosphorylates UL31 and UL34 homologs, two critical regulators of capsid budding from nucleus to endoplasmic reticulum, thereby facilitating virion egress. Modulates and redistributes host components of the nuclear envelope, including LMNA, emerin/EMD and the nuclear matrix protein MATR3. Phosphorylates envelope glycoprotein B (gB), probably to direct it to the cell surface. Promotes virus intracellular spread by restructuring host cell cytoskeleton. Blocks host apoptosis to extend cell survival and allow efficient viral replication. Promotes viral gene expression by phosphorylating host HDAC2 to reduce viral genome silencing. The sequence is that of Serine/threonine-protein kinase US3 homolog from Bos taurus (Bovine).